The sequence spans 325 residues: Beta-ketoacyl-[acyl-carrier-protein] synthase III (325 aa).

Residues Cys119 and His252 contribute to the active site. The interval 253–257 (QANIR) is ACP-binding. Asn282 is an active-site residue.

Belongs to the thiolase-like superfamily. FabH family. In terms of assembly, homodimer.

The protein resides in the cytoplasm. The enzyme catalyses malonyl-[ACP] + acetyl-CoA + H(+) = 3-oxobutanoyl-[ACP] + CO2 + CoA. It functions in the pathway lipid metabolism; fatty acid biosynthesis. In terms of biological role, catalyzes the condensation reaction of fatty acid synthesis by the addition to an acyl acceptor of two carbons from malonyl-ACP. Catalyzes the first condensation reaction which initiates fatty acid synthesis and may therefore play a role in governing the total rate of fatty acid production. Possesses both acetoacetyl-ACP synthase and acetyl transacylase activities. Its substrate specificity determines the biosynthesis of branched-chain and/or straight-chain of fatty acids. This is Beta-ketoacyl-[acyl-carrier-protein] synthase III from Polaromonas sp. (strain JS666 / ATCC BAA-500).